The sequence spans 195 residues: MYEYLDGVVVNVNPAYIVVDVNGVGFLVNVANPYSFELDAKQKVFVHQAVSENDQTLYGFKKAEDKELFLNLLKVKGIGPKSALAILANDDHTGLINAINNDDVSYLKKFPKIGPKAAQQIILDLKGKVAVENEVGTLFDLSTTSNQALDEALEALIALGYSEKEVKKLTKKLSEQTDRTTDQYISSGLKLLMKG.

The interval 1–61 (MYEYLDGVVV…ENDQTLYGFK (61 aa)) is domain I. Residues 62–139 (KAEDKELFLN…AVENEVGTLF (78 aa)) form a domain II region. A flexible linker region spans residues 139–143 (FDLST). The interval 144–195 (TSNQALDEALEALIALGYSEKEVKKLTKKLSEQTDRTTDQYISSGLKLLMKG) is domain III.

It belongs to the RuvA family. Homotetramer. Forms an RuvA(8)-RuvB(12)-Holliday junction (HJ) complex. HJ DNA is sandwiched between 2 RuvA tetramers; dsDNA enters through RuvA and exits via RuvB. An RuvB hexamer assembles on each DNA strand where it exits the tetramer. Each RuvB hexamer is contacted by two RuvA subunits (via domain III) on 2 adjacent RuvB subunits; this complex drives branch migration. In the full resolvosome a probable DNA-RuvA(4)-RuvB(12)-RuvC(2) complex forms which resolves the HJ.

The protein localises to the cytoplasm. The RuvA-RuvB-RuvC complex processes Holliday junction (HJ) DNA during genetic recombination and DNA repair, while the RuvA-RuvB complex plays an important role in the rescue of blocked DNA replication forks via replication fork reversal (RFR). RuvA specifically binds to HJ cruciform DNA, conferring on it an open structure. The RuvB hexamer acts as an ATP-dependent pump, pulling dsDNA into and through the RuvAB complex. HJ branch migration allows RuvC to scan DNA until it finds its consensus sequence, where it cleaves and resolves the cruciform DNA. In Pediococcus pentosaceus (strain ATCC 25745 / CCUG 21536 / LMG 10740 / 183-1w), this protein is Holliday junction branch migration complex subunit RuvA.